The chain runs to 272 residues: Homeobox protein Hox-D12 (272 aa).

The segment at residues 204–263 (SRRKRKPYTKQQIAELENEFLANEFINRQKRKELSDRLNLSDQQVKIWFQNRRMKKKRLV) is a DNA-binding region (homeobox).

The protein belongs to the Abd-B homeobox family.

It is found in the nucleus. Its function is as follows. Sequence-specific transcription factor which is part of a developmental regulatory system that provides cells with specific positional identities on the anterior-posterior axis. This is Homeobox protein Hox-D12 (HOXD12) from Heterodontus francisci (Horn shark).